A 480-amino-acid polypeptide reads, in one-letter code: Lysostaphin (480 aa).

Residues 1–23 (MKKTKNNYYTTPLAIGLSTFALA) form the signal peptide. Residues 24-234 (SIVYGGIQNE…ALVQNRTALR (211 aa)) constitute a propeptide that is removed on maturation. A run of 13 repeats spans residues 49 to 61 (AEVETSKPPVENT), 62 to 74 (AEVETSKAPVENT), 75 to 87 (AEVETSKAPVENT), 88 to 100 (AEVETSKAPVENT), 101 to 113 (AEVETSKAPVENT), 114 to 126 (AEVETSKAPVENT), 127 to 139 (AEVETSKAPVENT), 140 to 152 (AEVETSKAPVENT), 153 to 165 (AEVETSKAPVENT), 166 to 178 (AEVETSKAPVENT), 179 to 191 (AEVETSKAPVENT), 192 to 204 (AEVETSKAPVENT), and 205 to 217 (AEVETSKAPVENT). The segment at 49-230 (AEVETSKPPV…ETSKALVQNR (182 aa)) is 14 X 13 AA tandem repeats of A-E-V-E-T-S-K-[AP]-P-V-E-N-T. Residues 51-219 (VETSKPPVEN…SKAPVENTAE (169 aa)) form a disordered region. A 14; approximate repeat occupies 218–230 (AEVETSKALVQNR). Zn(2+)-binding residues include histidine 266 and aspartate 270. Histidine 347 is an active-site residue. Residue histidine 349 participates in Zn(2+) binding. In terms of domain architecture, SH3b spans 400–468 (SESASFTPNT…YLPVRTWNKS (69 aa)).

Belongs to the peptidase M23B family. In terms of assembly, monomer. Requires Zn(2+) as cofactor.

It localises to the secreted. It catalyses the reaction Hydrolysis of the -Gly-|-Gly- bond in the pentaglycine inter-peptide link joining staphylococcal cell wall peptidoglycans.. Its function is as follows. Lyses staphylococcal cells by hydrolyzing the polyglycine interpeptide bridges of the peptidoglycan. This chain is Lysostaphin (lss), found in Staphylococcus staphylolyticus.